The chain runs to 147 residues: MAKEVAGQIKLQIKGGAANPSPPVGPALGSKGINIMEFCKQFNAKTQDKAGKILPVVITYYADKSFDFVVKTPPVAIQLLEATKKKSGSAQPNRAKIAEITWDQVKAIAEDKLVDLNCFTVESAMRMVAGTARSMGITVKGTFPGNN.

This sequence belongs to the universal ribosomal protein uL11 family. Part of the ribosomal stalk of the 50S ribosomal subunit. Interacts with L10 and the large rRNA to form the base of the stalk. L10 forms an elongated spine to which L12 dimers bind in a sequential fashion forming a multimeric L10(L12)X complex. In terms of processing, one or more lysine residues are methylated.

Its function is as follows. Forms part of the ribosomal stalk which helps the ribosome interact with GTP-bound translation factors. This Parabacteroides distasonis (strain ATCC 8503 / DSM 20701 / CIP 104284 / JCM 5825 / NCTC 11152) protein is Large ribosomal subunit protein uL11.